The following is a 365-amino-acid chain: Aminomethyltransferase (365 aa).

This sequence belongs to the GcvT family. As to quaternary structure, the glycine cleavage system is composed of four proteins: P, T, L and H.

It carries out the reaction N(6)-[(R)-S(8)-aminomethyldihydrolipoyl]-L-lysyl-[protein] + (6S)-5,6,7,8-tetrahydrofolate = N(6)-[(R)-dihydrolipoyl]-L-lysyl-[protein] + (6R)-5,10-methylene-5,6,7,8-tetrahydrofolate + NH4(+). Its function is as follows. The glycine cleavage system catalyzes the degradation of glycine. This Chlorobaculum parvum (strain DSM 263 / NCIMB 8327) (Chlorobium vibrioforme subsp. thiosulfatophilum) protein is Aminomethyltransferase.